Here is a 369-residue protein sequence, read N- to C-terminus: RNA-binding protein rnp24 (369 aa).

Disordered regions lie at residues 1-77 (MEPI…KKKE), 200-219 (TDFS…TASI), and 304-369 (RMRN…IKFD). The RRM 1 domain occupies 105 to 206 (WGIWVGNLSF…KSNTDFSGRP (102 aa)). The span at 209 to 219 (PANTLSKTASI) shows a compositional bias: polar residues. Residues 228–310 (SILFVGNLDF…RSKRMRNKSP (83 aa)) form the RRM 2 domain. Positions 325–341 (QEDKPNFKRARKIDPRS) are enriched in basic and acidic residues. Over residues 346–357 (AALAKAQRSSAA) the composition is skewed to low complexity.

It localises to the nucleus. The chain is RNA-binding protein rnp24 (rnp24) from Schizosaccharomyces pombe (strain 972 / ATCC 24843) (Fission yeast).